A 623-amino-acid chain; its full sequence is E3 ubiquitin-protein ligase DTX1 (623 aa).

2 consecutive WWE domains span residues 13–93 (HNFG…PVRR) and 94–170 (NFFE…RLRR). The disordered stretch occupies residues 224–319 (KVPSGPPPAL…RASIPPGVPA (96 aa)). A compositionally biased stretch (pro residues) spans 227–242 (SGPPPALPPPPPPPIH). Positions 292 to 311 (GQNNLNRPGEQRTSGSSSRA) are enriched in polar residues. Residues 413-474 (CTICMERLVT…DGSLQCPTCK (62 aa)) form an RING-type zinc finger.

Belongs to the Deltex family. May form a homo- or heterodimer with other members of the Deltex family. Probably interacts with Notch1. In terms of tissue distribution, specifically expressed in regions undergoing neuronal differentiation. Mainly colocalizes with Notch1.

The enzyme catalyses S-ubiquitinyl-[E2 ubiquitin-conjugating enzyme]-L-cysteine + [acceptor protein]-L-lysine = [E2 ubiquitin-conjugating enzyme]-L-cysteine + N(6)-ubiquitinyl-[acceptor protein]-L-lysine.. It functions in the pathway protein modification; protein ubiquitination. Regulator of Notch signaling, a signaling pathway involved in cell-cell communications that regulates a broad spectrum of cell-fate determinations. Probably acts both as a positive and negative regulator of Notch, depending on the developmental and cell context. Functions as a ubiquitin ligase protein in vivo, mediating ubiquitination and promoting degradation of MEKK1, suggesting that it may regulate the Notch pathway via some ubiquitin ligase activity. The sequence is that of E3 ubiquitin-protein ligase DTX1 (dtx1) from Xenopus laevis (African clawed frog).